Consider the following 162-residue polypeptide: Calcium-binding protein 4b (162 aa).

EF-hand domains lie at 10-45 (ELTN…CKYP), 46-81 (NPTL…DYII), 85-120 (TCLK…SGSN), and 123-158 (QAKV…YFEI). Residues D23, N25, D27, Q29, E34, D59, D61, D63, K65, and E70 each coordinate Ca(2+). D136, D138, D140, C142, and E147 together coordinate Ca(2+).

The sequence is that of Calcium-binding protein 4b (cbpD2) from Dictyostelium discoideum (Social amoeba).